Here is a 221-residue protein sequence, read N- to C-terminus: Iron-sulfur cluster repair protein YtfE (221 aa).

This sequence belongs to the RIC family. YtfE subfamily. In terms of assembly, homodimer.

Its subcellular location is the cytoplasm. Functionally, di-iron-containing protein involved in the repair of iron-sulfur clusters damaged by oxidative and nitrosative stress conditions. The chain is Iron-sulfur cluster repair protein YtfE from Yersinia pseudotuberculosis serotype IB (strain PB1/+).